The chain runs to 390 residues: Large ribosomal subunit protein uL3y (390 aa).

The segment at 1-36 (MSHRKFEHPRHGSLGFLPRKRASRHRGKVKAFPKDD) is disordered. A compositionally biased stretch (basic residues) spans 18 to 31 (PRKRASRHRGKVKA).

It belongs to the universal ribosomal protein uL3 family.

It localises to the cytoplasm. This chain is Large ribosomal subunit protein uL3y (ARP2), found in Arabidopsis thaliana (Mouse-ear cress).